The sequence spans 291 residues: Small ribosomal subunit biogenesis GTPase RsgA (291 aa).

Residues 63-221 (KNEIKRPPVS…IADTPGFSAL (159 aa)) enclose the CP-type G domain. GTP contacts are provided by residues 112–115 (TKKD) and 164–172 (GQSGVGKST). Residues C245, C250, H252, and C258 each contribute to the Zn(2+) site.

It belongs to the TRAFAC class YlqF/YawG GTPase family. RsgA subfamily. Monomer. Associates with 30S ribosomal subunit, binds 16S rRNA. It depends on Zn(2+) as a cofactor.

Its subcellular location is the cytoplasm. In terms of biological role, one of several proteins that assist in the late maturation steps of the functional core of the 30S ribosomal subunit. Helps release RbfA from mature subunits. May play a role in the assembly of ribosomal proteins into the subunit. Circularly permuted GTPase that catalyzes slow GTP hydrolysis, GTPase activity is stimulated by the 30S ribosomal subunit. The chain is Small ribosomal subunit biogenesis GTPase RsgA from Staphylococcus saprophyticus subsp. saprophyticus (strain ATCC 15305 / DSM 20229 / NCIMB 8711 / NCTC 7292 / S-41).